Consider the following 236-residue polypeptide: 7-cyano-7-deazaguanine synthase (236 aa).

Residue 7 to 17 (CSGGLDSVSLA) coordinates ATP. Cys-185, Cys-193, Cys-196, and Cys-199 together coordinate Zn(2+).

The protein belongs to the QueC family. The cofactor is Zn(2+).

The catalysed reaction is 7-carboxy-7-deazaguanine + NH4(+) + ATP = 7-cyano-7-deazaguanine + ADP + phosphate + H2O + H(+). It participates in purine metabolism; 7-cyano-7-deazaguanine biosynthesis. In terms of biological role, catalyzes the ATP-dependent conversion of 7-carboxy-7-deazaguanine (CDG) to 7-cyano-7-deazaguanine (preQ(0)). This Rhizobium leguminosarum bv. trifolii (strain WSM2304) protein is 7-cyano-7-deazaguanine synthase.